Reading from the N-terminus, the 63-residue chain is Large ribosomal subunit protein uL29 (63 aa).

This sequence belongs to the universal ribosomal protein uL29 family.

The protein is Large ribosomal subunit protein uL29 of Enterobacter sp. (strain 638).